The sequence spans 413 residues: Phosphopentomutase (413 aa).

Mn(2+)-binding residues include Asp11, Asp306, His311, Asp347, His348, and His359.

This sequence belongs to the phosphopentomutase family. It depends on Mn(2+) as a cofactor.

The protein resides in the cytoplasm. The enzyme catalyses 2-deoxy-alpha-D-ribose 1-phosphate = 2-deoxy-D-ribose 5-phosphate. The catalysed reaction is alpha-D-ribose 1-phosphate = D-ribose 5-phosphate. It functions in the pathway carbohydrate degradation; 2-deoxy-D-ribose 1-phosphate degradation; D-glyceraldehyde 3-phosphate and acetaldehyde from 2-deoxy-alpha-D-ribose 1-phosphate: step 1/2. Functionally, isomerase that catalyzes the conversion of deoxy-ribose 1-phosphate (dRib-1-P) and ribose 1-phosphate (Rib-1-P) to deoxy-ribose 5-phosphate (dRib-5-P) and ribose 5-phosphate (Rib-5-P), respectively. In Helicobacter pylori (strain ATCC 700392 / 26695) (Campylobacter pylori), this protein is Phosphopentomutase.